A 501-amino-acid polypeptide reads, in one-letter code: DELTA-alicitoxin-Pse2a (501 aa).

The first 22 residues, 1 to 22 (MSPYFKLSSALIFLAITMEALC), serve as a signal peptide directing secretion. The propeptide occupies 23–35 (SPIENTSTSNKDN). The MACPF domain maps to 23–359 (SPIENTSTSN…GFLHFGCSYL (337 aa)). A coiled-coil region spans residues 135–159 (AAVTNNIASSEEEVQGLSLNLKAYS). An EGF-like domain is found at 388–422 (VCKVGPEGCQHHEDCHYRAAFWCECGGPYDLARTC). 3 disulfide bridges follow: Cys389–Cys402, Cys396–Cys410, and Cys412–Cys422.

The protein localises to the secreted. It localises to the nematocyst. Functionally, causes lethal toxicity to the shrimp Palaemon paucidence, and hemolytic activity toward sheep red blood cells. The polypeptide is DELTA-alicitoxin-Pse2a (Phyllodiscus semoni (Night anemone)).